Consider the following 281-residue polypeptide: MTWKIVSDSGCDFRELKDLALDTNFENVPLTIQVGQEIFIDNAELNIDLMMEKMYATSTASKSACPSPDDYLKAFAGADNIFVVTITGTLSGSHNSAQVAKKLYLEEHPNVNIHVIDSLSAGGEVDLLVQKLNQLISNGLSFDEIVQEITNYQSKTKLLFVLAKVDNLVKNGRLNKLIGAVVGLPNIRMVGEAGPQGTLELLQKARGYKKSLSAAFEEIIKAGYAGGEIIISHRNNDKFCQQFSDLVKEKFPNAQIQAIPTSGLCSFYAEEGGLLMGYEIG.

One can recognise a DegV domain in the interval 3–280 (WKIVSDSGCD…EGGLLMGYEI (278 aa)). 2 residues coordinate hexadecanoate: S63 and S91.

In terms of biological role, may bind long-chain fatty acids, such as palmitate, and may play a role in lipid transport or fatty acid metabolism. This Streptococcus gordonii protein is DegV domain-containing protein.